We begin with the raw amino-acid sequence, 617 residues long: Sphingosine kinase 2 (617 aa).

Positions 1-140 (MAPPPLLPVA…LSGDQEITPE (140 aa)) are required for binding to sulfatide and phosphoinositides and for membrane localization. A Nuclear localization signal motif is present at residues 87-95 (RGRRGGRRR). The DAGKc domain maps to 143–290 (PRKPRLLILV…LDLLSVTLAS (148 aa)). ATP is bound by residues 153–155 (NPF) and 185–189 (TERQN). 210 to 213 (SGDG) lines the substrate pocket. The active-site Proton donor/acceptor is the Asp212. Residues Glu217 and 242–244 (GSG) contribute to the ATP site. Asp309 contacts substrate. ATP is bound by residues Arg316 and Arg322. A phosphoserine mark is found at Ser358 and Ser364. A disordered region spans residues 371–472 (APAPAATHSP…GFLPPTHSAP (102 aa)). A Phosphothreonine modification is found at Thr377. Residues 381–390 (LHRSVSDLPL) carry the Nuclear export signal motif. 2 positions are modified to phosphoserine: Ser384 and Ser386. Residues 412–426 (NGGGPELTGDWGGAG) show a composition bias toward gly residues. Thr578 bears the Phosphothreonine mark. 586–588 (DGE) lines the ATP pocket.

As to quaternary structure, interacts with histone H3. Interacts with HDAC1, HDAC2, MBD2 and SIN3A. Interacts with EEF1A1; the interaction enhances SPHK2 kinase activity. Interacts with PHB2. Mg(2+) is required as a cofactor. In terms of processing, phosphorylated by PKD on Ser-384 and Ser-386 upon PMA treatment. Phosphorylation induces export from the nucleus to the cytoplasm. Phosphorylated by MAPK1 and MAPK2 at Thr-578, phosphorylation is induced by agonists such as EGF and PMA and increases kinase activity. Cleaved by CASP1 in apoptotic cells. The truncated form is released from cells. In terms of tissue distribution, expressed in heart, brain, liver, kidney and testis. Expressed by mast cells (at protein level). In the substantia nigra, expressed by dopaminergic neurons (at protein level).

The protein resides in the lysosome membrane. It localises to the cytoplasm. Its subcellular location is the cell membrane. It is found in the endoplasmic reticulum. The protein localises to the nucleus. The protein resides in the mitochondrion inner membrane. The enzyme catalyses a sphingoid base + ATP = a sphingoid 1-phosphate + ADP + H(+). The catalysed reaction is sphing-4-enine + ATP = sphing-4-enine 1-phosphate + ADP + H(+). It carries out the reaction sphinganine + ATP = sphinganine 1-phosphate + ADP + H(+). It catalyses the reaction (4R)-hydroxysphinganine + ATP = (4R)-hydroxysphinganine 1-phosphate + ADP + H(+). Functionally, catalyzes the phosphorylation of sphingosine to form sphingosine-1-phosphate (SPP), a lipid mediator with both intra- and extracellular functions. Also acts on D-erythro-dihydrosphingosine, D-erythro-sphingosine and L-threo-dihydrosphingosine. Binds phosphoinositides. In contrast to prosurvival SPHK1, has a positive effect on intracellular ceramide levels, inhibits cells growth and enhances apoptosis. In mitochondria, is important for cytochrome-c oxidase assembly and mitochondrial respiration. The SPP produced in mitochondria binds PHB2 and modulates the regulation via PHB2 of complex IV assembly and respiration. In nucleus, plays a role in epigenetic regulation of gene expression. Interacts with HDAC1 and HDAC2 and, through SPP production, inhibits their enzymatic activity, preventing the removal of acetyl groups from lysine residues with histones. Up-regulates acetylation of histone H3-K9, histone H4-K5 and histone H2B-K12. In nucleus, may have an inhibitory effect on DNA synthesis and cell cycle. In mast cells, is the main regulator of SPP production which mediates calcium influx, NF-kappa-B activation, cytokine production, such as TNF and IL6, and degranulation of mast cells. In dopaminergic neurons, is involved in promoting mitochondrial functions regulating ATP and ROS levels. Also involved in the regulation of glucose and lipid metabolism. The sequence is that of Sphingosine kinase 2 from Mus musculus (Mouse).